An 81-amino-acid polypeptide reads, in one-letter code: Acyl carrier protein (81 aa).

One can recognise a Carrier domain in the interval 2-80; it reads ASEQEILSGL…DAVAYISQAQ (79 aa). S40 bears the O-(pantetheine 4'-phosphoryl)serine mark.

The protein belongs to the acyl carrier protein (ACP) family. Post-translationally, 4'-phosphopantetheine is transferred from CoA to a specific serine of apo-ACP by AcpS. This modification is essential for activity because fatty acids are bound in thioester linkage to the sulfhydryl of the prosthetic group.

Its subcellular location is the cytoplasm. Its pathway is lipid metabolism; fatty acid biosynthesis. Its function is as follows. Carrier of the growing fatty acid chain in fatty acid biosynthesis. The protein is Acyl carrier protein of Kineococcus radiotolerans (strain ATCC BAA-149 / DSM 14245 / SRS30216).